The primary structure comprises 296 residues: POM121-like protein 12 (296 aa).

2 disordered regions span residues 1–54 and 142–162; these read MGAA…SPWP and APPERQESPWRSPGQRARPAG. Over residues 34–52 the composition is skewed to low complexity; it reads SRSPSTPQTTPSPQGRQSP.

It belongs to the POM121 family.

In Homo sapiens (Human), this protein is POM121-like protein 12 (POM121L12).